The following is a 206-amino-acid chain: Protein GET1 (206 aa).

The Lumenal portion of the chain corresponds to 1 to 4 (MPSL). The chain crosses the membrane as a helical span at residues 5–24 (LITVLFLNVIIYVINTVGAA). Over 25-110 (TVDGLLWLLY…TFDMTIKIAR (86 aa)) the chain is Cytoplasmic. Residues 75-100 (AKLRRRHDKAMEAYEAKNNELTQSKS) adopt a coiled-coil conformation. A helical transmembrane segment spans residues 111 to 131 (WAATSGLMLFLQFWYSKTPIF). Over 132–155 (TLPPGWIPWQVQWVLSFPRAPMGT) the chain is Lumenal. The chain crosses the membrane as a helical span at residues 156–172 (VSIQIWGGACATVVALV). Over 173-206 (GDAMRASLAYVSKPKIDRIKLGATMEGKEGKKRQ) the chain is Cytoplasmic.

This sequence belongs to the WRB/GET1 family. Interacts with GET3.

Its subcellular location is the endoplasmic reticulum membrane. Functionally, required for the post-translational delivery of tail-anchored (TA) proteins to the endoplasmic reticulum. Acts as a membrane receptor for soluble GET3, which recognizes and selectively binds the transmembrane domain of TA proteins in the cytosol. This is Protein GET1 from Ajellomyces capsulatus (strain NAm1 / WU24) (Darling's disease fungus).